Reading from the N-terminus, the 73-residue chain is Large ribosomal subunit protein uL29 (73 aa).

This sequence belongs to the universal ribosomal protein uL29 family.

The polypeptide is Large ribosomal subunit protein uL29 (rpmC) (Aquifex aeolicus (strain VF5)).